The primary structure comprises 813 residues: Enhancer of polycomb homolog 1 (813 aa).

3 disordered regions span residues 310–403 (FKHQ…PFAF), 484–513 (MLSS…SKDL), and 528–577 (FRPR…SSGS). Positions 311–333 (KHQDATDSKEFKVNKQDKADLIR) are enriched in basic and acidic residues. Lys-319 is covalently cross-linked (Glycyl lysine isopeptide (Lys-Gly) (interchain with G-Cter in SUMO2)). A compositionally biased stretch (low complexity) spans 346-361 (PPSAAAPQQQSPAALP). Over residues 486–513 (SSPQPSPVNQFANTSEPNTSDRSSSKDL) the composition is skewed to polar residues. Residue Ser-538 is modified to Phosphoserine. Positions 564–577 (TCSTSTQNRSSSGS) are enriched in low complexity. Residue Lys-650 forms a Glycyl lysine isopeptide (Lys-Gly) (interchain with G-Cter in SUMO2) linkage. The interval 779–813 (VPSSSSVDSVPRENHESEKPALNNIADNTVAMEVT) is disordered. Residues 788–797 (VPRENHESEK) are compositionally biased toward basic and acidic residues.

Belongs to the enhancer of polycomb family. In terms of assembly, component of the NuA4 histone acetyltransferase complex which contains the catalytic subunit KAT5/TIP60 and the subunits EP400, TRRAP/PAF400, BRD8/SMAP, EPC1, DMAP1/DNMAP1, RUVBL1/TIP49, RUVBL2, ING3, actin, ACTL6A/BAF53A, MORF4L1/MRG15, MORF4L2/MRGX, MRGBP, YEATS4/GAS41, VPS72/YL1 and MEAF6. KAT5/TIP60, EPC1, and ING3 together constitute a minimal HAT complex termed Piccolo NuA4. Component of a NuA4-related complex which contains EP400, TRRAP/PAF400, SRCAP, BRD8/SMAP, EPC1, DMAP1/DNMAP1, RUVBL1/TIP49, RUVBL2, actin, ACTL6A/BAF53A, VPS72 and YEATS4/GAS41. Interacts with TRIM27. Interacts with MBTD1; interaction is direct and promotes recruitment of MBTD1 into the NuA4 histone acetyltransferase complex. In terms of tissue distribution, expressed in adult brain, heart, kidney, liver, lung, skeletal muscle and testis. Expressed in male germ cells, present in round spermatids of steps 1 to 4.

The protein localises to the nucleus. The protein resides in the cytoplasm. Functionally, component of the NuA4 histone acetyltransferase (HAT) complex, a multiprotein complex involved in transcriptional activation of select genes principally by acetylation of nucleosomal histones H4 and H2A. The NuA4 complex plays a direct role in repair of DNA double-strand breaks (DSBs) by promoting homologous recombination (HR). The NuA4 complex is also required for spermatid development by promoting acetylation of histones: histone acetylation is required for histone replacement during the transition from round to elongating spermatids. In the NuA4 complex, EPC1 is required to recruit MBTD1 into the complex. The sequence is that of Enhancer of polycomb homolog 1 from Mus musculus (Mouse).